Consider the following 277-residue polypeptide: Protein PTST, chloroplastic (277 aa).

The N-terminal 44 residues, 1-44 (MGCVPRIEFGCSSQSLTLSWNLRAWNLCRLNTISHFQKLPYPLV), are a transit peptide targeting the chloroplast. A coiled-coil region spans residues 95–152 (DTERSKLVKKLSEANQQNRFLKRQLKTQEHEITNIKTELALMELEVQALVKLAEEIAN).

In terms of assembly, interacts with GBSS1.

The protein resides in the plastid. It is found in the chloroplast stroma. Functionally, involved in targeting GBSS1 to the starch granule. Was originally thought to be a carbohydrate-binding scaffold protein, but it has been shown that it is mainly found as a soluble protein and that interaction with GBSS1 is a pre-requisite for subsequent starch granule binding. Dissociation from starch as a function of pH, Mg(2+) concentration or redox state is not observed. Interacts primarily with amylopectin and is required for amylose synthesis. The polypeptide is Protein PTST, chloroplastic (Arabidopsis thaliana (Mouse-ear cress)).